A 147-amino-acid polypeptide reads, in one-letter code: Monothiol glutaredoxin-S5 (147 aa).

The 98-residue stretch at 49-146 (AAEVRRAVAE…PILKKAGALW (98 aa)) folds into the Glutaredoxin domain. Cysteine 69 is a binding site for [2Fe-2S] cluster. The Responsive for interaction with TGA factors motif lies at 144–147 (ALWL).

This sequence belongs to the glutaredoxin family. CC-type subfamily.

The protein resides in the cytoplasm. The protein localises to the nucleus. Functionally, may only reduce GSH-thiol disulfides, but not protein disulfides. This is Monothiol glutaredoxin-S5 (GRXS5) from Oryza sativa subsp. japonica (Rice).